The following is a 622-amino-acid chain: Basic helix-loop-helix ARNT-like protein 2 (622 aa).

The span at 1–10 (MAEAGVGSAE) shows a compositional bias: low complexity. 2 disordered regions span residues 1 to 29 (MAEA…DGNS) and 41 to 86 (PITK…EDEE). A compositionally biased stretch (polar residues) spans 45-54 (PATTSFNNSV). The span at 67 to 76 (DNQDTVEVDG) shows a compositional bias: acidic residues. The segment covering 77–86 (DPQKRNEDEE) has biased composition (basic and acidic residues). Positions 92–145 (DFREAHSQTEKRRRDKMNNLIEELSAMIPQCNPMARKLDKLTVLRMAVQHLKSL) constitute a bHLH domain. PAS domains are found at residues 163–235 (KDDE…DVSP) and 342–412 (VPQK…LQNK). In terms of domain architecture, PAC spans 417 to 460 (TNSYKFRAKDGSFITLKSQWFSFMNPWTKELEYIVSNNTVVLGH).

Component of the circadian core oscillator, which includes the CRY proteins, CLOCK, or NPAS2, BMAL1 or BMAL2, CSNK1D and/or CSNK1E, TIMELESS and the PER proteins. Interacts directly with CLOCK to form the BMAL2-CLOCK transactivator. Can form heterodimers or homodimers which interact directly with CLOCK to form the transcription activator. Expressed in the pineal gland.

It localises to the nucleus. Functionally, transcriptional activator which forms a core component of the circadian clock. The circadian clock, an internal time-keeping system, regulates various physiological processes through the generation of approximately 24 hour circadian rhythms in gene expression, which are translated into rhythms in metabolism and behavior. It is derived from the Latin roots 'circa' (about) and 'diem' (day) and acts as an important regulator of a wide array of physiological functions including metabolism, sleep, body temperature, blood pressure, endocrine, immune, cardiovascular, and renal function. Consists of two major components: the central clock, residing in the suprachiasmatic nucleus (SCN) of the brain, and the peripheral clocks that are present in nearly every tissue and organ system. Both the central and peripheral clocks can be reset by environmental cues, also known as Zeitgebers (German for 'timegivers'). The predominant Zeitgeber for the central clock is light, which is sensed by retina and signals directly to the SCN. The central clock entrains the peripheral clocks through neuronal and hormonal signals, body temperature and feeding-related cues, aligning all clocks with the external light/dark cycle. Circadian rhythms allow an organism to achieve temporal homeostasis with its environment at the molecular level by regulating gene expression to create a peak of protein expression once every 24 hours to control when a particular physiological process is most active with respect to the solar day. Transcription and translation of core clock components (CLOCK, NPAS2, BMAL1, BMAL2, PER1, PER2, PER3, CRY1 and CRY2) plays a critical role in rhythm generation, whereas delays imposed by post-translational modifications (PTMs) are important for determining the period (tau) of the rhythms (tau refers to the period of a rhythm and is the length, in time, of one complete cycle). A diurnal rhythm is synchronized with the day/night cycle, while the ultradian and infradian rhythms have a period shorter and longer than 24 hours, respectively. Disruptions in the circadian rhythms contribute to the pathology of cardiovascular diseases, cancer, metabolic syndromes and aging. A transcription/translation feedback loop (TTFL) forms the core of the molecular circadian clock mechanism. Transcription factors, CLOCK or NPAS2 and BMAL1 or BMAL2, form the positive limb of the feedback loop, act in the form of a heterodimer and activate the transcription of core clock genes and clock-controlled genes (involved in key metabolic processes), harboring E-box elements (5'-CACGTG-3') within their promoters. The core clock genes: PER1/2/3 and CRY1/2 which are transcriptional repressors form the negative limb of the feedback loop and interact with the CLOCK|NPAS2-BMAL1|BMAL2 heterodimer inhibiting its activity and thereby negatively regulating their own expression. This heterodimer also activates nuclear receptors NR1D1/2 and RORA/B/G, which form a second feedback loop and which activate and repress BMAL1 transcription, respectively. The preferred binding motif for the CLOCK-BMAL1 heterodimer is 5'-CACGTGA-3', which contains a flanking adenine nucleotide at the 3-prime end of the canonical 6-nucleotide E-box sequence. CLOCK specifically binds to the half-site 5'-CAC-3', while BMAL1 binds to the half-site 5'-GTGA-3'. The protein is Basic helix-loop-helix ARNT-like protein 2 (BMAL2) of Gallus gallus (Chicken).